A 456-amino-acid polypeptide reads, in one-letter code: Protein COBRA (456 aa).

An N-terminal signal peptide occupies residues 1 to 36 (MESFFSRSTSIVSKLSFLALWIVFLISSSSFTSTEA). Asn-45, Asn-170, Asn-178, Asn-217, Asn-242, Asn-258, Asn-328, Asn-343, and Asn-362 each carry an N-linked (GlcNAc...) asparagine glycan. Residue Asn-431 is the site of GPI-anchor amidated asparagine attachment. Positions 432 to 456 (GGSRSQFSFVAAVLLPLLVFFFFSA) are cleaved as a propeptide — removed in mature form.

Belongs to the COBRA family. Expressed in roots, stems, leaves, flowers and siliques. Up-regulated in the root zone of rapid longitudinal expansion.

It localises to the lateral cell membrane. Functionally, involved in determining the orientation of cell expansion, probably by playing an important role in cellulose deposition. May act by recruiting cellulose synthesizing complexes to discrete positions on the cell surface. This Arabidopsis thaliana (Mouse-ear cress) protein is Protein COBRA (COB).